The following is a 608-amino-acid chain: Phosphoenolpyruvate carboxykinase [GTP] (608 aa).

Substrate is bound by residues R82 and 222–224 (YGG). Mn(2+) is bound by residues K231 and H251. S273 serves as a coordination point for substrate. Residue 274-279 (ACGKTN) participates in GTP binding. The active site involves C275. Residue D298 participates in Mn(2+) binding. Residue 389 to 391 (NSR) participates in substrate binding. GTP contacts are provided by residues R391, R422, and 517–520 (FGDN).

The protein belongs to the phosphoenolpyruvate carboxykinase [GTP] family. Monomer. Mn(2+) is required as a cofactor.

The protein localises to the cytoplasm. The catalysed reaction is oxaloacetate + GTP = phosphoenolpyruvate + GDP + CO2. The protein operates within carbohydrate biosynthesis; gluconeogenesis. Its function is as follows. Catalyzes the conversion of oxaloacetate (OAA) to phosphoenolpyruvate (PEP), the rate-limiting step in the metabolic pathway that produces glucose from lactate and other precursors derived from the citric acid cycle. The sequence is that of Phosphoenolpyruvate carboxykinase [GTP] from Paenarthrobacter aurescens (strain TC1).